A 2273-amino-acid chain; its full sequence is Acetyl-CoA carboxylase, mitochondrial (2273 aa).

A mitochondrion-targeting transit peptide spans 1 to 104; it reads KGKTITHGQS…RGNIHKHTRL (104 aa). The 502-residue stretch at 134-635 folds into the Biotin carboxylation domain; it reads VISKILIANN…STGWLDDLIL (502 aa). The region spanning 292 to 484 is the ATP-grasp domain; sequence KTNFVSVPDD…LPATQLQIAM (193 aa). 332–337 is a binding site for ATP; that stretch reads GGGGKG. Arg459 is an active-site residue. One can recognise a Biotinyl-binding domain in the interval 763–837; that stretch reads LEAELNPTQV…EAGDVIAKLT (75 aa). Residue Lys804 is modified to N6-biotinyllysine. Residues 1532-1867 form the CoA carboxyltransferase N-terminal domain; the sequence is PYSVKDWLQP…KRDMSPPLLE (336 aa). A carboxyltransferase region spans residues 1532-2187; it reads PYSVKDWLQP…EGQVIKRLQK (656 aa). CoA contacts are provided by Arg1776, Lys2080, and Arg2082. Positions 1871 to 2187 constitute a CoA carboxyltransferase C-terminal domain; the sequence is RWDRDVDFKP…EGQVIKRLQK (317 aa).

Biotin serves as cofactor.

The protein resides in the mitochondrion. It catalyses the reaction hydrogencarbonate + acetyl-CoA + ATP = malonyl-CoA + ADP + phosphate + H(+). The enzyme catalyses N(6)-biotinyl-L-lysyl-[protein] + hydrogencarbonate + ATP = N(6)-carboxybiotinyl-L-lysyl-[protein] + ADP + phosphate + H(+). It participates in lipid metabolism; malonyl-CoA biosynthesis; malonyl-CoA from acetyl-CoA: step 1/1. Functionally, catalyzes the rate-limiting reaction in the mitochondrial fatty acid synthesis (FAS) type II pathway. Responsible for the production of the mitochondrial malonyl-CoA, used for the biosynthesis of the cofactor lipoic acid. This protein carries three functions: biotin carboxyl carrier protein, biotin carboxylase, and carboxyltransferase. The polypeptide is Acetyl-CoA carboxylase, mitochondrial (HFA1) (Saccharomyces cerevisiae (strain RM11-1a) (Baker's yeast)).